We begin with the raw amino-acid sequence, 241 residues long: Proteasome subunit alpha (241 aa).

It belongs to the peptidase T1A family. As to quaternary structure, the 20S proteasome core is composed of 14 alpha and 14 beta subunits that assemble into four stacked heptameric rings, resulting in a barrel-shaped structure. The two inner rings, each composed of seven catalytic beta subunits, are sandwiched by two outer rings, each composed of seven alpha subunits. The catalytic chamber with the active sites is on the inside of the barrel. Has a gated structure, the ends of the cylinder being occluded by the N-termini of the alpha-subunits. Is capped by the proteasome-associated ATPase, ARC.

The protein resides in the cytoplasm. It functions in the pathway protein degradation; proteasomal Pup-dependent pathway. With respect to regulation, the formation of the proteasomal ATPase ARC-20S proteasome complex, likely via the docking of the C-termini of ARC into the intersubunit pockets in the alpha-rings, may trigger opening of the gate for substrate entry. Interconversion between the open-gate and close-gate conformations leads to a dynamic regulation of the 20S proteasome proteolysis activity. In terms of biological role, component of the proteasome core, a large protease complex with broad specificity involved in protein degradation. This Frankia alni (strain DSM 45986 / CECT 9034 / ACN14a) protein is Proteasome subunit alpha.